Here is a 158-residue protein sequence, read N- to C-terminus: uncharacterized protein (158 aa).

It belongs to the mimivirus L223/L227/L812 family.

This is an uncharacterized protein from Acanthamoeba polyphaga mimivirus (APMV).